The sequence spans 111 residues: Macrodomain Ori protein (111 aa).

The protein belongs to the MaoP family.

Involved in the organization of the Ori region of the chromosome into a macrodomain (MD). It constrains DNA mobility in the Ori macrodomain and limits long-distance DNA interactions with other chromosomal regions. In Haemophilus influenzae (strain ATCC 51907 / DSM 11121 / KW20 / Rd), this protein is Macrodomain Ori protein.